We begin with the raw amino-acid sequence, 901 residues long: HTH-type transcriptional regulator MalT (901 aa).

Residue 39–46 (SPAGYGKT) coordinates ATP. An HTH luxR-type domain is found at 829–894 (ELIRTSPLTQ…AAVQHAQKLL (66 aa)). The H-T-H motif DNA-binding region spans 853 to 872 (NEQIAGELEVAATTIKTHIR).

The protein belongs to the MalT family. Monomer in solution. Oligomerizes to an active state in the presence of the positive effectors ATP and maltotriose.

Activated by ATP and maltotriose, which are both required for DNA binding. In terms of biological role, positively regulates the transcription of the maltose regulon whose gene products are responsible for uptake and catabolism of malto-oligosaccharides. Specifically binds to the promoter region of its target genes, recognizing a short DNA motif called the MalT box. In Escherichia coli (strain 55989 / EAEC), this protein is HTH-type transcriptional regulator MalT.